The chain runs to 815 residues: Probable receptor-like protein kinase At2g39360 (815 aa).

The N-terminal stretch at 1–26 is a signal peptide; that stretch reads MINLKLFLELKLCFLITLLCSSHISS. The Extracellular portion of the chain corresponds to 27-407; that stretch reads VSDTFFINCG…SSSNKSSNTS (381 aa). N-linked (GlcNAc...) asparagine glycans are attached at residues N40, N45, N125, N146, N209, N244, N277, N331, N355, N401, and N405. Residues 408–428 traverse the membrane as a helical segment; that stretch reads VGLIAGLSAALCVALVFGVVV. Residues 429–815 are Cytoplasmic-facing; sequence SWWCIRKRRR…FAQMVREETR (387 aa). A Protein kinase domain is found at 487–761; it reads FDESLVIGVG…GDLLWNLEFM (275 aa). Residues 493–501 and K515 contribute to the ATP site; that span reads IGVGGFGKV. The active-site Proton acceptor is the D612.

Belongs to the protein kinase superfamily. Ser/Thr protein kinase family.

The protein resides in the cell membrane. This Arabidopsis thaliana (Mouse-ear cress) protein is Probable receptor-like protein kinase At2g39360.